Reading from the N-terminus, the 287-residue chain is Large ribosomal subunit protein uL2 (287 aa).

The interval 220–287 is disordered; sequence VRGSVMNPCD…SKRSRGGRDS (68 aa). A compositionally biased stretch (basic residues) spans 271–287; the sequence is VRRRRRISKRSRGGRDS.

It belongs to the universal ribosomal protein uL2 family. As to quaternary structure, part of the 50S ribosomal subunit. Forms a bridge to the 30S subunit in the 70S ribosome.

Functionally, one of the primary rRNA binding proteins. Required for association of the 30S and 50S subunits to form the 70S ribosome, for tRNA binding and peptide bond formation. It has been suggested to have peptidyltransferase activity; this is somewhat controversial. Makes several contacts with the 16S rRNA in the 70S ribosome. In Prochlorococcus marinus (strain MIT 9515), this protein is Large ribosomal subunit protein uL2.